Reading from the N-terminus, the 174-residue chain is NADH-ubiquinone oxidoreductase chain 6 (174 aa).

5 helical membrane passes run 1-21 (MTYVLFTLSVMLVMGFVGFSS), 24-44 (SPIYGGLALVVSGVVGCMIIL), 47-67 (GGAYLGLVMFLIYLGGMMVVF), 86-106 (FEVLACFLVGLMMEVGLVLWV), and 151-171 (WLVVVAGWTLFVGVYVVIEIT).

This sequence belongs to the complex I subunit 6 family. As to quaternary structure, core subunit of respiratory chain NADH dehydrogenase (Complex I) which is composed of 45 different subunits.

The protein localises to the mitochondrion inner membrane. The enzyme catalyses a ubiquinone + NADH + 5 H(+)(in) = a ubiquinol + NAD(+) + 4 H(+)(out). Its function is as follows. Core subunit of the mitochondrial membrane respiratory chain NADH dehydrogenase (Complex I) which catalyzes electron transfer from NADH through the respiratory chain, using ubiquinone as an electron acceptor. Essential for the catalytic activity and assembly of complex I. The protein is NADH-ubiquinone oxidoreductase chain 6 (MT-ND6) of Papio hamadryas (Hamadryas baboon).